Reading from the N-terminus, the 354-residue chain is ATPase GET3 (354 aa).

26 to 33 (KGGVGKTT) provides a ligand contact to ATP. The active site involves D57. 2 residues coordinate ATP: E245 and N272. C285 and C288 together coordinate Zn(2+).

The protein belongs to the arsA ATPase family. In terms of assembly, homodimer. Component of the Golgi to ER traffic (GET) complex, which is composed of GET1, GET2 and GET3. Within the complex, GET1 and GET2 form a heterotetramer which is stabilized by phosphatidylinositol binding and which binds to the GET3 homodimer. Interacts with the chloride channel protein GEF1.

It localises to the cytoplasm. The protein localises to the endoplasmic reticulum. Its subcellular location is the golgi apparatus. ATPase required for the post-translational delivery of tail-anchored (TA) proteins to the endoplasmic reticulum. Recognizes and selectively binds the transmembrane domain of TA proteins in the cytosol. This complex then targets to the endoplasmic reticulum by membrane-bound receptors GET1 and GET2, where the tail-anchored protein is released for insertion. This process is regulated by ATP binding and hydrolysis. ATP binding drives the homodimer towards the closed dimer state, facilitating recognition of newly synthesized TA membrane proteins. ATP hydrolysis is required for insertion. Subsequently, the homodimer reverts towards the open dimer state, lowering its affinity for the GET1-GET2 receptor, and returning it to the cytosol to initiate a new round of targeting. Cooperates with the HDEL receptor ERD2 to mediate the ATP-dependent retrieval of resident ER proteins that contain a C-terminal H-D-E-L retention signal from the Golgi to the ER. Involved in low-level resistance to the oxyanions arsenite and arsenate, and in heat tolerance. This Saccharomyces cerevisiae (strain RM11-1a) (Baker's yeast) protein is ATPase GET3.